A 261-amino-acid polypeptide reads, in one-letter code: 6-phosphogluconolactonase (261 aa).

This sequence belongs to the glucosamine/galactosamine-6-phosphate isomerase family. 6-phosphogluconolactonase subfamily.

It carries out the reaction 6-phospho-D-glucono-1,5-lactone + H2O = 6-phospho-D-gluconate + H(+). Its pathway is carbohydrate degradation; pentose phosphate pathway; D-ribulose 5-phosphate from D-glucose 6-phosphate (oxidative stage): step 2/3. Its function is as follows. Hydrolysis of 6-phosphogluconolactone to 6-phosphogluconate. This is 6-phosphogluconolactonase (pgl) from Streptomyces coelicolor (strain ATCC BAA-471 / A3(2) / M145).